Here is a 432-residue protein sequence, read N- to C-terminus: Adenylosuccinate synthetase (432 aa).

Residues 13–19 (GDEGKGK) and 41–43 (GHT) contribute to the GTP site. Residue Asp14 is the Proton acceptor of the active site. Positions 14 and 41 each coordinate Mg(2+). Residues 14 to 17 (DEGK), 39 to 42 (NAGH), Thr130, Arg144, Gln225, Thr240, and Arg304 contribute to the IMP site. The active-site Proton donor is His42. Residue 300–306 (AVTGRPR) participates in substrate binding. GTP is bound by residues Arg306, 332–334 (KLD), and 415–417 (STG).

It belongs to the adenylosuccinate synthetase family. Homodimer. Mg(2+) is required as a cofactor.

The protein localises to the cytoplasm. The enzyme catalyses IMP + L-aspartate + GTP = N(6)-(1,2-dicarboxyethyl)-AMP + GDP + phosphate + 2 H(+). It participates in purine metabolism; AMP biosynthesis via de novo pathway; AMP from IMP: step 1/2. Functionally, plays an important role in the de novo pathway of purine nucleotide biosynthesis. Catalyzes the first committed step in the biosynthesis of AMP from IMP. This chain is Adenylosuccinate synthetase, found in Histophilus somni (strain 129Pt) (Haemophilus somnus).